We begin with the raw amino-acid sequence, 1164 residues long: Integrin alpha-5 (1164 aa).

Residues 1-14 (MREEGGGSREKEGE) show a composition bias toward basic and acidic residues. Positions 1 to 119 (MREEGGGSRE…MGSRTPGSPL (119 aa)) are disordered. The segment covering 81–90 (LLPALSHSPL) has biased composition (low complexity). The stretch at 156 to 221 (NLDAEAPAVL…CPWGTSPAQC (66 aa)) is one FG-GAP 1 repeat. Residue Asn197 is glycosylated (N-linked (GlcNAc...) asparagine). Cysteines 212 and 221 form a disulfide. Ser240 carries the phosphoserine modification. FG-GAP repeat units follow at residues 241 to 301 (SEGE…QILE), 306 to 358 (RSDF…AESY), 372 to 424 (QTRQ…GSDI), 425 to 490 (RSLY…GMEP), 491 to 550 (TPTL…GLAS), and 554 to 617 (QVLL…IFPA). A disulfide bond links Cys269 and Cys289. Asn295 carries an N-linked (GlcNAc...) asparagine glycan. A disulfide bond links Cys305 and Cys318. A protein contacts are provided by Gln375 and Asp382. Ca(2+) is bound by residues Glu393, Ser395, Asp397, and Asp401. Residues Asn410, Asn420, and Asn429 are each glycosylated (N-linked (GlcNAc...) asparagine). Residues Asp447, Asn449, Asp451, Leu453, Asp455, Asp514, Asp516, Asp518, Tyr520, Asp522, Asp578, Asp580, Asn582, Tyr584, and Asp586 each contribute to the Ca(2+) site. An intrachain disulfide couples Cys626 to Cys635. N-linked (GlcNAc...) asparagine glycosylation is found at Asn637, Asn643, Asn706, and Asn722. Cys641 and Cys697 are oxidised to a cystine. Cysteines 758 and 764 form a disulfide. 5 N-linked (GlcNAc...) asparagine glycosylation sites follow: Asn788, Asn825, Asn837, Asn886, and Asn982. An intrachain disulfide couples Cys831 to Cys844. 3 disulfides stabilise this stretch: Cys962-Cys1072, Cys983-Cys1036, and Cys1026-Cys1031. The interval 983–1022 (CTTSHPPNPEGLELDPEGSQHHRLQRRDVPGRSPASSGPQ) is disordered. Residues 1114-1134 (LWIIILAILIGLLLLGLLIYI) form a helical membrane-spanning segment. Topologically, residues 1135–1164 (LYKLGFFKRSLPYGTAMEKAQLKPPATSDA) are cytoplasmic. The interval 1136–1143 (YKLGFFKR) is interaction with HPS5. A GFFKR motif motif is present at residues 1139–1143 (GFFKR).

Belongs to the integrin alpha chain family. As to quaternary structure, heterodimer of an alpha and a beta subunit. The alpha subunit is composed of a heavy and a light chain linked by a disulfide bond. Alpha-5 associates with beta-1. Interacts with NISCH. Interacts with HPS5. Interacts with RAB21 and COMP. Interacts with CIB1. ITGA5:ITGB1 interacts with CCN3. ITGA5:ITGB1 interacts with FBN1. ITGA5:ITGB1 interacts with IL1B. ITGA5:ITGB1 interacts with ACE2. ITGA5:ITGB1 interacts with SELP. Interacts with ANGPT2. ITGA5:ITGB1 interacts with IGFBP2. ITGA5:ITGB1 interacts with IGFBP1. Proteolytic cleavage by PCSK5 mediates activation of the precursor.

It is found in the cell membrane. The protein resides in the cell junction. The protein localises to the focal adhesion. Integrin alpha-5/beta-1 (ITGA5:ITGB1) is a receptor for fibronectin and fibrinogen. It recognizes the sequence R-G-D in its ligands. ITGA5:ITGB1 binds to PLA2G2A via a site (site 2) which is distinct from the classical ligand-binding site (site 1) and this induces integrin conformational changes and enhanced ligand binding to site 1. ITGA5:ITGB1 acts as a receptor for fibrillin-1 (FBN1) and mediates R-G-D-dependent cell adhesion to FBN1. ITGA5:ITGB1 acts as a receptor for fibronectin (FN1) and mediates R-G-D-dependent cell adhesion to FN1. ITGA5:ITGB1 is a receptor for IL1B and binding is essential for IL1B signaling. ITGA5:ITGB3 is a receptor for soluble CD40LG and is required for CD40/CD40LG signaling. The chain is Integrin alpha-5 (ITGA5) from Bos taurus (Bovine).